A 477-amino-acid chain; its full sequence is Proton extrusion protein PxcA (477 aa).

3 consecutive transmembrane segments (helical) span residues 239-259 (FILLVILVPLLIHQLSKITFV), 354-374 (GIKNIFCDFISLITFVIIIST), and 437-457 (FNFLFIATFPVILDAVFKYWI).

Belongs to the CemA family.

The protein resides in the cell inner membrane. Functionally, required for H(+) efflux immediately after light irradiation to form a rapid H(+) concentration gradient across the thylakoid membranes. Together with PxcL, contributes to transient H(+) uptake following dark to light transition. The polypeptide is Proton extrusion protein PxcA (Trichodesmium erythraeum (strain IMS101)).